Consider the following 244-residue polypeptide: Tetraspanin-1 (244 aa).

4 helical membrane passes run valine 11–phenylalanine 31, leucine 67–leucine 87, tyrosine 104–valine 124, and isoleucine 198–isoleucine 218.

It belongs to the tetraspanin (TM4SF) family.

It localises to the membrane. This is Tetraspanin-1 (tsp-1) from Caenorhabditis elegans.